Consider the following 391-residue polypeptide: NAD(P)H-quinone oxidoreductase subunit H, chloroplastic (391 aa).

The protein belongs to the complex I 49 kDa subunit family. NDH is composed of at least 16 different subunits, 5 of which are encoded in the nucleus.

The protein localises to the plastid. The protein resides in the chloroplast thylakoid membrane. It carries out the reaction a plastoquinone + NADH + (n+1) H(+)(in) = a plastoquinol + NAD(+) + n H(+)(out). It catalyses the reaction a plastoquinone + NADPH + (n+1) H(+)(in) = a plastoquinol + NADP(+) + n H(+)(out). Functionally, NDH shuttles electrons from NAD(P)H:plastoquinone, via FMN and iron-sulfur (Fe-S) centers, to quinones in the photosynthetic chain and possibly in a chloroplast respiratory chain. The immediate electron acceptor for the enzyme in this species is believed to be plastoquinone. Couples the redox reaction to proton translocation, and thus conserves the redox energy in a proton gradient. The sequence is that of NAD(P)H-quinone oxidoreductase subunit H, chloroplastic from Mesostigma viride (Green alga).